The following is a 460-amino-acid chain: uncharacterized protein (460 aa).

The tat-type signal signal peptide spans 1–33 (MKESNSRREFLSQSGKMVTAAALFGTSVPLAHA).

This sequence belongs to the metallo-dependent hydrolases superfamily. Exported by the Tat system. The position of the signal peptide cleavage has not been experimentally proven. Can also be exported by the Sec system.

This is an uncharacterized protein from Escherichia coli (strain K12).